A 122-amino-acid chain; its full sequence is Large ribosomal subunit protein uL14 (122 aa).

The protein belongs to the universal ribosomal protein uL14 family. In terms of assembly, part of the 50S ribosomal subunit. Forms a cluster with proteins L3 and L19. In the 70S ribosome, L14 and L19 interact and together make contacts with the 16S rRNA in bridges B5 and B8.

Binds to 23S rRNA. Forms part of two intersubunit bridges in the 70S ribosome. This Psychromonas ingrahamii (strain DSM 17664 / CCUG 51855 / 37) protein is Large ribosomal subunit protein uL14.